A 291-amino-acid polypeptide reads, in one-letter code: Ribosomal RNA small subunit methyltransferase A (291 aa).

S-adenosyl-L-methionine is bound by residues H21, L23, G48, E70, D95, and N115.

This sequence belongs to the class I-like SAM-binding methyltransferase superfamily. rRNA adenine N(6)-methyltransferase family. RsmA subfamily.

The protein localises to the cytoplasm. It catalyses the reaction adenosine(1518)/adenosine(1519) in 16S rRNA + 4 S-adenosyl-L-methionine = N(6)-dimethyladenosine(1518)/N(6)-dimethyladenosine(1519) in 16S rRNA + 4 S-adenosyl-L-homocysteine + 4 H(+). In terms of biological role, specifically dimethylates two adjacent adenosines (A1518 and A1519) in the loop of a conserved hairpin near the 3'-end of 16S rRNA in the 30S particle. May play a critical role in biogenesis of 30S subunits. The chain is Ribosomal RNA small subunit methyltransferase A from Prochlorococcus marinus (strain NATL2A).